Here is a 93-residue protein sequence, read N- to C-terminus: Putative pterin-4-alpha-carbinolamine dehydratase (93 aa).

Belongs to the pterin-4-alpha-carbinolamine dehydratase family.

It carries out the reaction (4aS,6R)-4a-hydroxy-L-erythro-5,6,7,8-tetrahydrobiopterin = (6R)-L-erythro-6,7-dihydrobiopterin + H2O. This is Putative pterin-4-alpha-carbinolamine dehydratase from Nostoc sp. (strain PCC 7120 / SAG 25.82 / UTEX 2576).